Here is an 889-residue protein sequence, read N- to C-terminus: MSANNSPPSAQKSVFPATVSAVLPAPSPCSSPKTGLSARLSNGSFSAPSLTNSRGSVHTVSFLLQIGLTRESVTIEAQELSLSAVKDLVCSIVYQKFPECGFFGMYDKILLFRHDMNSENILQLITSADEIHEGDLVEVVLSALATVEDFQIRPHALYVHSYKAPTFCDYCGEMLWGLVRQGLKCEGCGLNYHKRCAFKIPNNCSGVRKRRLSNVSLPGPGLSVPRPLQPECVPLLSEESHTHQEPSKRIPSWSGRPIWMEKMVMCRVKVPHTFAVHSYGRPTICQYCKRLLKGLFRQGMQCKDCKFNCHKRCASKVPRDCLGEVTFNGEPCSVGTDADMPMDIDSSDVNSDGSRGLDDSEEPSPPEDKMFFLDPTDLDVERDEETVKTISPSTSNNIPLMRVVQSIKHTKRRSSTVVKEGWMVHYTSRDNLRKRHYWRLDSKCLTLFQNESGSKYYKEIPLSEILRVSSPQDFTSISQGSNPHCFEIITDTVVYFVGENNGSSSHNPVLAATGVGLDVAQSWEKAIRQALMPVTPQASVCTSPGQGKDHNLATSISVSNCQVQENVDISSVYQIFADEVLGSGQFGIVYGGKHRKTGRDVAIKVIDKMRFPTKQESQLRNEVAILQNLHHPGIVNLECMFETPERVFVVMEKLHGDMLEMILSSEKSRLPERITKFMVTQILVALRNLHFKNIVHCDLKPENVLLASAEPFPQVKLCDFGFARIIGEKSFRRSVVGTPAYLAPEVLRSKGYNRSLDMWSVGVIVYVSLSGTFPFNEDEDINDQIQNAAFMYPPNPWREISSEAIDLINNLLQVKMRKRYSVDKSLSHPWLQDYQTWLDLREFETRIGERYITHESDDARWEIHAYTHNLEYPKHFIMAPNPDDMEEDP.

Phosphoserine is present on residues Ser-27, Ser-37, Ser-41, and Ser-44. Residues 154–204 form a Phorbol-ester/DAG-type 1 zinc finger; it reads PHALYVHSYKAPTFCDYCGEMLWGLVRQGLKCEGCGLNYHKRCAFKIPNNC. Residues Ser-213 and Ser-216 each carry the phosphoserine modification. The Phorbol-ester/DAG-type 2 zinc-finger motif lies at 271-321; sequence PHTFAVHSYGRPTICQYCKRLLKGLFRQGMQCKDCKFNCHKRCASKVPRDC. The disordered stretch occupies residues 336–370; sequence TDADMPMDIDSSDVNSDGSRGLDDSEEPSPPEDKM. Phosphoserine occurs at positions 346, 391, and 395. One can recognise a PH domain in the interval 416-532; the sequence is TVVKEGWMVH…WEKAIRQALM (117 aa). Position 426 is a phosphotyrosine (Tyr-426). A Phosphoserine modification is found at Ser-442. Tyr-457 bears the Phosphotyrosine mark. Thr-535 carries the phosphothreonine modification. A Phosphoserine modification is found at Ser-539. The region spanning 575–831 is the Protein kinase domain; it reads IFADEVLGSG…VDKSLSHPWL (257 aa). Residues 581–589 and Lys-604 contribute to the ATP site; that span reads LGSGQFGIV. The active-site Proton acceptor is Asp-698. Ser-730 is subject to Phosphoserine; by PKC. Ser-734 bears the Phosphoserine; by autocatalysis mark. At Tyr-741 the chain carries Phosphotyrosine.

The protein belongs to the protein kinase superfamily. CAMK Ser/Thr protein kinase family. PKD subfamily. Requires Mg(2+) as cofactor.

It localises to the cytoplasm. Its subcellular location is the membrane. The enzyme catalyses L-seryl-[protein] + ATP = O-phospho-L-seryl-[protein] + ADP + H(+). It catalyses the reaction L-threonyl-[protein] + ATP = O-phospho-L-threonyl-[protein] + ADP + H(+). Activated by DAG and phorbol esters. Phorbol-ester/DAG-type domains 1 and 2 bind both DAG and phorbol ester with high affinity and mediate translocation to the cell membrane. Autophosphorylation of Ser-734 and phosphorylation of Ser-730 by PKC relieves auto-inhibition by the PH domain. Functionally, converts transient diacylglycerol (DAG) signals into prolonged physiological effects, downstream of PKC. Involved in resistance to oxidative stress. The sequence is that of Serine/threonine-protein kinase D3 (Prkd3) from Mus musculus (Mouse).